The primary structure comprises 203 residues: Outer-membrane lipoprotein carrier protein (203 aa).

A signal peptide spans 1–21 (MKKQLMTSCLFAAVLAAPAFA).

Belongs to the LolA family. As to quaternary structure, monomer.

The protein resides in the periplasm. Its function is as follows. Participates in the translocation of lipoproteins from the inner membrane to the outer membrane. Only forms a complex with a lipoprotein if the residue after the N-terminal Cys is not an aspartate (The Asp acts as a targeting signal to indicate that the lipoprotein should stay in the inner membrane). The chain is Outer-membrane lipoprotein carrier protein from Sodalis glossinidius (strain morsitans).